Consider the following 409-residue polypeptide: Glycosaminoglycan xylosylkinase (409 aa).

The Cytoplasmic portion of the chain corresponds to 1–6 (MKLKQR). A helical; Signal-anchor for type II membrane protein membrane pass occupies residues 7-25 (VVVLCAVLFLLGLAKVFLL). The Lumenal segment spans residues 26–409 (DGGEGSAASR…IEDRMNLPHP (384 aa)). Residues Gln-107 and Lys-123 each coordinate ATP. Residue Asp-142 participates in Mn(2+) binding. A glycan (N-linked (GlcNAc...) asparagine) is linked at Asn-193. Intrachain disulfides connect Cys-196–Cys-211 and Cys-201–Cys-204. 222 to 225 (TLWL) lines the ATP pocket. 2 disulfides stabilise this stretch: Cys-257–Cys-331 and Cys-332–Cys-389. The active site involves Asp-289. ATP is bound by residues Glu-294 and Asp-309. Asp-309 serves as a coordination point for Mn(2+).

Belongs to the FAM20 family. Requires Mn(2+) as cofactor.

Its subcellular location is the golgi apparatus membrane. The catalysed reaction is 3-O-(beta-D-galactosyl-(1-&gt;3)-beta-D-galactosyl-(1-&gt;4)-beta-D-xylosyl)-L-seryl-[protein] + ATP = 3-O-(beta-D-galactosyl-(1-&gt;3)-beta-D-galactosyl-(1-&gt;4)-beta-D-2-O-phosphoxylosyl)-L-seryl-[protein] + ADP + H(+). In terms of biological role, responsible for the 2-O-phosphorylation of xylose in the glycosaminoglycan-protein linkage region of proteoglycans thereby regulating the amount of mature GAG chains. Sulfated glycosaminoglycans (GAGs), including heparan sulfate and chondroitin sulfate, are synthesized on the so-called common GAG-protein linkage region (GlcUAbeta1-3Galbeta1-3Galbeta1-4Xylbeta1-O-Ser) of core proteins, which is formed by the stepwise addition of monosaccharide residues by the respective specific glycosyltransferases. This Danio rerio (Zebrafish) protein is Glycosaminoglycan xylosylkinase.